The sequence spans 459 residues: ATP-dependent protease ATPase subunit HslU (459 aa).

ATP-binding positions include V26, 68–73 (GVGKTE), D271, E337, and R409.

Belongs to the ClpX chaperone family. HslU subfamily. As to quaternary structure, a double ring-shaped homohexamer of HslV is capped on each side by a ring-shaped HslU homohexamer. The assembly of the HslU/HslV complex is dependent on binding of ATP.

It localises to the cytoplasm. Its function is as follows. ATPase subunit of a proteasome-like degradation complex; this subunit has chaperone activity. The binding of ATP and its subsequent hydrolysis by HslU are essential for unfolding of protein substrates subsequently hydrolyzed by HslV. HslU recognizes the N-terminal part of its protein substrates and unfolds these before they are guided to HslV for hydrolysis. The chain is ATP-dependent protease ATPase subunit HslU from Xylella fastidiosa (strain 9a5c).